The sequence spans 206 residues: Probable GTP-binding protein EngB (206 aa).

The region spanning 29-201 is the EngB-type G domain; it reads ILPEVAVVGR…MIMIQDALND (173 aa). Residues 37–44, 64–68, 82–85, 149–152, and 180–182 each bind GTP; these read GRSNVGKS, GKTQA, DLPG, TKID, and YSV. Residues Ser-44 and Thr-66 each coordinate Mg(2+).

Belongs to the TRAFAC class TrmE-Era-EngA-EngB-Septin-like GTPase superfamily. EngB GTPase family. The cofactor is Mg(2+).

Its function is as follows. Necessary for normal cell division and for the maintenance of normal septation. This chain is Probable GTP-binding protein EngB, found in Protochlamydia amoebophila (strain UWE25).